We begin with the raw amino-acid sequence, 176 residues long: Mitochondrial inner membrane protein Mpv17 (176 aa).

Helical transmembrane passes span 18 to 38 (VQVL…QQLV), 57 to 77 (LGCG…DHLI), 94 to 114 (GGFA…LNGM), and 131 to 151 (LITN…LVPL).

It belongs to the peroxisomal membrane protein PXMP2/4 family.

It localises to the mitochondrion inner membrane. In terms of biological role, non-selective channel that modulates the membrane potential under normal conditions and oxidative stress, and is involved in mitochondrial homeostasis. Involved in mitochondrial deoxynucleoside triphosphates (dNTP) pool homeostasis and mitochondrial DNA (mtDNA) maintenance. May be involved in the regulation of reactive oxygen species metabolism and the control of oxidative phosphorylation. The chain is Mitochondrial inner membrane protein Mpv17 from Rattus norvegicus (Rat).